The chain runs to 554 residues: 2-succinyl-5-enolpyruvyl-6-hydroxy-3-cyclohexene-1-carboxylate synthase (554 aa).

Belongs to the TPP enzyme family. MenD subfamily. Homodimer. Mg(2+) serves as cofactor. The cofactor is Mn(2+). Requires thiamine diphosphate as cofactor.

It carries out the reaction isochorismate + 2-oxoglutarate + H(+) = 5-enolpyruvoyl-6-hydroxy-2-succinyl-cyclohex-3-ene-1-carboxylate + CO2. The protein operates within quinol/quinone metabolism; 1,4-dihydroxy-2-naphthoate biosynthesis; 1,4-dihydroxy-2-naphthoate from chorismate: step 2/7. Its pathway is quinol/quinone metabolism; menaquinone biosynthesis. In terms of biological role, catalyzes the thiamine diphosphate-dependent decarboxylation of 2-oxoglutarate and the subsequent addition of the resulting succinic semialdehyde-thiamine pyrophosphate anion to isochorismate to yield 2-succinyl-5-enolpyruvyl-6-hydroxy-3-cyclohexene-1-carboxylate (SEPHCHC). This chain is 2-succinyl-5-enolpyruvyl-6-hydroxy-3-cyclohexene-1-carboxylate synthase, found in Mycobacterium tuberculosis (strain ATCC 25177 / H37Ra).